The sequence spans 350 residues: 2-oxoisovalerate dehydrogenase subunit beta (350 aa).

Heterodimer of an alpha and a beta chain. Thiamine diphosphate serves as cofactor.

The enzyme catalyses N(6)-[(R)-lipoyl]-L-lysyl-[protein] + 3-methyl-2-oxobutanoate + H(+) = N(6)-[(R)-S(8)-2-methylpropanoyldihydrolipoyl]-L-lysyl-[protein] + CO2. In terms of biological role, the branched-chain alpha-keto dehydrogenase complex catalyzes the overall conversion of alpha-keto acids to acyl-CoA and CO(2). It contains multiple copies of three enzymatic components: branched-chain alpha-keto acid decarboxylase (E1), lipoamide acyltransferase (E2) and lipoamide dehydrogenase (E3). The chain is 2-oxoisovalerate dehydrogenase subunit beta (bkdA2) from Pseudomonas aeruginosa (strain ATCC 15692 / DSM 22644 / CIP 104116 / JCM 14847 / LMG 12228 / 1C / PRS 101 / PAO1).